The chain runs to 488 residues: Pup--protein ligase (488 aa).

Residue Glu-33 participates in Mg(2+) binding. Arg-76 is an ATP binding site. Position 78 (Tyr-78) interacts with Mg(2+). Residue Asp-80 is the Proton acceptor of the active site. Glu-86 serves as a coordination point for Mg(2+). Residues Thr-89 and Trp-453 each coordinate ATP.

It belongs to the Pup ligase/Pup deamidase family. Pup-conjugating enzyme subfamily.

The catalysed reaction is ATP + [prokaryotic ubiquitin-like protein]-L-glutamate + [protein]-L-lysine = ADP + phosphate + N(6)-([prokaryotic ubiquitin-like protein]-gamma-L-glutamyl)-[protein]-L-lysine.. It participates in protein degradation; proteasomal Pup-dependent pathway. The protein operates within protein modification; protein pupylation. Functionally, catalyzes the covalent attachment of the prokaryotic ubiquitin-like protein modifier Pup to the proteasomal substrate proteins, thereby targeting them for proteasomal degradation. This tagging system is termed pupylation. The ligation reaction involves the side-chain carboxylate of the C-terminal glutamate of Pup and the side-chain amino group of a substrate lysine. The polypeptide is Pup--protein ligase (Bifidobacterium adolescentis (strain ATCC 15703 / DSM 20083 / NCTC 11814 / E194a)).